Reading from the N-terminus, the 373-residue chain is Flagellar P-ring protein (373 aa).

The first 27 residues, 1–27 (MPSFSPTLLKLAAAALSALLLSGVAAS), serve as a signal peptide directing secretion.

This sequence belongs to the FlgI family. In terms of assembly, the basal body constitutes a major portion of the flagellar organelle and consists of four rings (L,P,S, and M) mounted on a central rod.

The protein resides in the periplasm. It is found in the bacterial flagellum basal body. In terms of biological role, assembles around the rod to form the L-ring and probably protects the motor/basal body from shearing forces during rotation. The chain is Flagellar P-ring protein from Rhodopseudomonas palustris (strain BisB5).